Consider the following 928-residue polypeptide: Diacylglycerol kinase zeta (928 aa).

Residues 1–14 are compositionally biased toward basic and acidic residues; that stretch reads MEPRDGSPEARSSD. Disordered regions lie at residues 1–46 and 59–82; these read MEPR…RRFP and KSGLQHLAPPPPTPGAPCSESERQ. Positions 15-24 are enriched in low complexity; sequence SESASASSSG. The span at 25–37 shows a compositional bias: basic and acidic residues; that stretch reads SERDAGPEPDKAP. 2 consecutive Phorbol-ester/DAG-type zinc fingers follow at residues 98 to 152 and 172 to 230; these read HIWF…NFRC and HHWV…EEPC. The tract at residues 251–280 is disordered; it reads PQNTLKASKKKKRASFKRKSSKKGPEEGRW. Positions 257–272 are enriched in basic residues; it reads ASKKKKRASFKRKSSK. The tract at residues 259 to 273 is MARCKS homology; that stretch reads KKKKRASFKRKSSKK. The mediates interaction with RASGRP1 stretch occupies residues 278 to 416; the sequence is GRWRPFIIRP…HVEEGNVVQL (139 aa). Positions 291-425 constitute a DAGKc domain; it reads PLMKPLLVFV…LDRWDLHAEP (135 aa). Residues 361 to 369 carry the Nuclear export signal motif; that stretch reads LSTLDQLRL. Ser-705 carries the post-translational modification Phosphoserine. Residues 759–788 are disordered; sequence ARPDLPTPTSPLPTSPCSPTPRSLQGDAAP. A compositionally biased stretch (pro residues) spans 763–777; that stretch reads LPTPTSPLPTSPCSP. Ser-781 is modified (phosphoserine). ANK repeat units follow at residues 822-852 and 857-886; these read QSRTLLHHAVSTGSKDVVRYLLDHAPPEILD and NGETCLHQAAALGQRTICHYIVEAGASLMK. Residues 924 to 928 carry the PDZ-binding motif; the sequence is QETAV.

It belongs to the eukaryotic diacylglycerol kinase family. As to quaternary structure, interacts (via PDZ-binding motif) with the PDZ domain of the syntrophin SNTG1 and that of SNX27. Interacts with IRS1 in the absence of insulin; insulin stimulation decreases this interaction. Found in a ternary complex with IRS1 and PIP5K1A in the absence of insulin. Interacts with PIP5K1A. Forms a signaling complex with RASGRP1 and HRAS. Phosphorylation of the MARCKS homology domain by PKC reduces nuclear accumulation of DGK-zeta. Highest levels in brain, and substantial levels in skeletal muscle, heart, and pancreas. As to expression, predominantly expressed in muscle.

The protein localises to the nucleus. It is found in the cytoplasm. Its subcellular location is the cytosol. It localises to the cell membrane. The protein resides in the cell projection. The protein localises to the lamellipodium. It carries out the reaction a 1,2-diacyl-sn-glycerol + ATP = a 1,2-diacyl-sn-glycero-3-phosphate + ADP + H(+). The enzyme catalyses a 1-O-alkyl-sn-glycerol + ATP = a 1-O-alkyl-sn-glycero-3-phosphate + ADP + H(+). It catalyses the reaction 1-O-alkyl-2-acyl-sn-glycerol + ATP = 1-O-alkyl-2-acyl-sn-glycero-3-phosphate + ADP + H(+). The catalysed reaction is 1,2-didecanoyl-sn-glycerol + ATP = 1,2-didecanoyl-sn-glycero-3-phosphate + ADP + H(+). It carries out the reaction 1,2-ditetradecanoyl-sn-glycerol + ATP = 1,2-ditetradecanoyl-sn-glycero-3-phosphate + ADP + H(+). The enzyme catalyses 1-hexadecanoyl-2-(9Z-octadecenoyl)-sn-glycerol + ATP = 1-hexadecanoyl-2-(9Z-octadecenoyl)-sn-glycero-3-phosphate + ADP + H(+). It catalyses the reaction 1-hexadecanoyl-2-(5Z,8Z,11Z,14Z-eicosatetraenoyl)-sn-glycerol + ATP = 1-hexadecanoyl-2-(5Z,8Z,11Z,14Z-eicosatetraenoyl)-sn-glycero-3-phosphate + ADP + H(+). The catalysed reaction is 1-octadecanoyl-2-(9Z-octadecenoyl)-sn-glycerol + ATP = 1-octadecanoyl-2-(9Z-octadecenoyl)-sn-glycero-3-phosphate + ADP + H(+). It carries out the reaction 1-octadecanoyl-2-(5Z,8Z,11Z,14Z-eicosatetraenoyl)-sn-glycerol + ATP = 1-octadecanoyl-2-(5Z,8Z,11Z,14Z-eicosatetraenoyl)-sn-glycero-3-phosphate + ADP + H(+). The enzyme catalyses 1-octadecanoyl-2-(4Z,7Z,10Z,13Z,16Z,19Z-docosahexaenoyl)-sn-glycerol + ATP = 1-octadecanoyl-2-(4Z,7Z,10Z,13Z,16Z,19Z-docosahexaenoyl)-sn-glycero-3-phosphate + ADP + H(+). It catalyses the reaction 1,2-di-(9Z-octadecenoyl)-sn-glycerol + ATP = 1,2-di-(9Z-octadecenoyl)-sn-glycero-3-phosphate + ADP + H(+). The catalysed reaction is 1-(9Z-octadecenoyl)-2-hexadecanoyl-sn-glycerol + ATP = 1-(9Z)-octadecenoyl-2-hexadecanoyl-sn-glycero-3-phosphate + ADP + H(+). It carries out the reaction 1-eicosanoyl-2-(5Z,8Z,11Z,14Z)-eicosatetraenoyl-sn-glycerol + ATP = 1-eicosanoyl-2-(5Z,8Z,11Z,14Z)-eicosatetraenoyl-sn-glycero-3-phosphate + ADP + H(+). The enzyme catalyses 1,2-di-(5Z,8Z,11Z,14Z)-eicosatetraenoyl-sn-glycerol + ATP = 1,2-di-(5Z,8Z,11Z,14Z)-eicosatetraenoyl-sn-glycero-3-phosphate + ADP + H(+). It catalyses the reaction 1-O-hexadecyl-2-acetyl-sn-glycerol + ATP = 1-O-hexadecyl-2-acetyl-sn-glycero-3-phosphate + ADP + H(+). The catalysed reaction is 1-O-hexadecyl-2-(5Z,8Z,11Z,14Z-eicosatetraenoyl)-sn-glycerol + ATP = 1-O-hexadecyl-2-(5Z,8Z,11Z,14Z-eicosatetraenoyl)-sn-glycero-3-phosphate + ADP + H(+). It carries out the reaction 1-O-hexadecyl-2-(9Z-octadecenoyl)-sn-glycerol + ATP = 1-O-hexadecyl-2-(9Z-octadecenoyl)-sn-glycero-3-phosphate + ADP + H(+). The enzyme catalyses 1-O-hexadecyl-sn-glycerol + ATP = 1-O-hexadecyl-sn-glycero-3-phosphate + ADP + H(+). It functions in the pathway lipid metabolism; glycerolipid metabolism. With respect to regulation, activated by 1,2-diacyl-sn-glycero-3-phosphate/phosphatidic acid irrespective of its acyl chain composition. Its function is as follows. Diacylglycerol kinase that converts diacylglycerol/DAG into phosphatidic acid/phosphatidate/PA and regulates the respective levels of these two bioactive lipids. Thereby, acts as a central switch between the signaling pathways activated by these second messengers with different cellular targets and opposite effects in numerous biological processes. Also plays an important role in the biosynthesis of complex lipids. Does not exhibit an acyl chain-dependent substrate specificity among diacylglycerol species. Can also phosphorylate 1-alkyl-2-acylglycerol in vitro but less efficiently and with a preference for alkylacylglycerols containing an arachidonoyl group. The biological processes it is involved in include T cell activation since it negatively regulates T-cell receptor signaling which is in part mediated by diacylglycerol. By generating phosphatidic acid, stimulates PIP5KIA activity which regulates actin polymerization. Through the same mechanism could also positively regulate insulin-induced translocation of SLC2A4 to the cell membrane. In terms of biological role, regulates RASGRP1 activity. Functionally, does not regulate RASGRP1 activity. This Homo sapiens (Human) protein is Diacylglycerol kinase zeta.